The following is a 414-amino-acid chain: Riboflavin biosynthesis protein RibBA (414 aa).

A DHBP synthase region spans residues methionine 1–lysine 204. Residues arginine 28–glutamate 29, aspartate 33, arginine 141–threonine 145, and glutamate 165 contribute to the D-ribulose 5-phosphate site. Glutamate 29 provides a ligand contact to Mg(2+). Histidine 144 provides a ligand contact to Mg(2+). Residues histidine 205 to glutamine 414 are GTP cyclohydrolase II. Position 255–259 (arginine 255–glutamate 259) interacts with GTP. The Zn(2+) site is built by cysteine 260, cysteine 271, and cysteine 273. GTP is bound by residues glutamine 276, glutamate 299–arginine 301, and threonine 321. Aspartate 333 serves as the catalytic Proton acceptor; for GTP cyclohydrolase activity. Arginine 335 serves as the catalytic Nucleophile; for GTP cyclohydrolase activity. 2 residues coordinate GTP: threonine 356 and lysine 361.

This sequence in the N-terminal section; belongs to the DHBP synthase family. It in the C-terminal section; belongs to the GTP cyclohydrolase II family. Requires Mg(2+) as cofactor. The cofactor is Mn(2+). Zn(2+) serves as cofactor.

The catalysed reaction is D-ribulose 5-phosphate = (2S)-2-hydroxy-3-oxobutyl phosphate + formate + H(+). It carries out the reaction GTP + 4 H2O = 2,5-diamino-6-hydroxy-4-(5-phosphoribosylamino)-pyrimidine + formate + 2 phosphate + 3 H(+). Its pathway is cofactor biosynthesis; riboflavin biosynthesis; 2-hydroxy-3-oxobutyl phosphate from D-ribulose 5-phosphate: step 1/1. It participates in cofactor biosynthesis; riboflavin biosynthesis; 5-amino-6-(D-ribitylamino)uracil from GTP: step 1/4. Functionally, catalyzes the conversion of D-ribulose 5-phosphate to formate and 3,4-dihydroxy-2-butanone 4-phosphate. In terms of biological role, catalyzes the conversion of GTP to 2,5-diamino-6-ribosylamino-4(3H)-pyrimidinone 5'-phosphate (DARP), formate and pyrophosphate. The protein is Riboflavin biosynthesis protein RibBA of Nocardia farcinica (strain IFM 10152).